The sequence spans 122 residues: Flagellar protein FliT (122 aa).

The segment at 1–50 (MTSTVEFINRWQRIALLSQSLLELAQRGEWDLLLQQEVSYLQRIETVMEK) is required for homodimerization. The interval 60–98 (IQDMVAGYIKQTLDNEQLLKGLLQQRLDELSSLIGQSTR) is fliD binding.

The protein belongs to the FliT family. As to quaternary structure, homodimer. Interacts with FliD and FlhC.

Its subcellular location is the cytoplasm. The protein localises to the cytosol. In terms of biological role, dual-function protein that regulates the transcription of class 2 flagellar operons and that also acts as an export chaperone for the filament-capping protein FliD. As a transcriptional regulator, acts as an anti-FlhDC factor; it directly binds FlhC, thus inhibiting the binding of the FlhC/FlhD complex to class 2 promoters, resulting in decreased expression of class 2 flagellar operons. As a chaperone, effects FliD transition to the membrane by preventing its premature polymerization, and by directing it to the export apparatus. This is Flagellar protein FliT from Salmonella paratyphi A (strain AKU_12601).